Consider the following 548-residue polypeptide: Uridine-cytidine kinase-like 1 (548 aa).

Over residues 1–18 (MAAPPASMSAAPSPLQSA) the composition is skewed to low complexity. Residues 1-74 (MAAPPASMSA…CKSEPPLLRT (74 aa)) are disordered. Ser-56 and Ser-63 each carry phosphoserine. 105–112 (GGSASGKT) provides a ligand contact to ATP. Ser-539 bears the Phosphoserine mark.

The protein belongs to the uridine kinase family. As to quaternary structure, interacts with RNF19B. In terms of processing, ubiquitinated by RNF19B; which induces proteasomal degradation.

Its subcellular location is the cytoplasm. The protein localises to the nucleus. The catalysed reaction is uridine + ATP = UMP + ADP + H(+). It catalyses the reaction cytidine + ATP = CMP + ADP + H(+). It functions in the pathway pyrimidine metabolism; UMP biosynthesis via salvage pathway; UMP from uridine: step 1/1. Its function is as follows. May contribute to UTP accumulation needed for blast transformation and proliferation. The chain is Uridine-cytidine kinase-like 1 (Uckl1) from Mus musculus (Mouse).